The sequence spans 468 residues: 6-phospho-beta-galactosidase 2 (468 aa).

D-galactose 6-phosphate-binding residues include Q19, H116, N159, E160, and N297. The active-site Proton donor is the E160. E375 (nucleophile) is an active-site residue. The D-galactose 6-phosphate site is built by S428, W429, K435, and Y437.

This sequence belongs to the glycosyl hydrolase 1 family.

It carries out the reaction a 6-phospho-beta-D-galactoside + H2O = D-galactose 6-phosphate + an alcohol. Its pathway is carbohydrate metabolism; lactose degradation; D-galactose 6-phosphate and beta-D-glucose from lactose 6-phosphate: step 1/1. The chain is 6-phospho-beta-galactosidase 2 from Streptococcus pneumoniae (strain ATCC BAA-255 / R6).